Here is a 294-residue protein sequence, read N- to C-terminus: 4-hydroxy-tetrahydrodipicolinate synthase (294 aa).

Threonine 45 provides a ligand contact to pyruvate. Tyrosine 133 functions as the Proton donor/acceptor in the catalytic mechanism. Lysine 161 (schiff-base intermediate with substrate) is an active-site residue. Residue isoleucine 203 coordinates pyruvate.

Belongs to the DapA family. In terms of assembly, homotetramer; dimer of dimers.

It localises to the cytoplasm. It carries out the reaction L-aspartate 4-semialdehyde + pyruvate = (2S,4S)-4-hydroxy-2,3,4,5-tetrahydrodipicolinate + H2O + H(+). Its pathway is amino-acid biosynthesis; L-lysine biosynthesis via DAP pathway; (S)-tetrahydrodipicolinate from L-aspartate: step 3/4. In terms of biological role, catalyzes the condensation of (S)-aspartate-beta-semialdehyde [(S)-ASA] and pyruvate to 4-hydroxy-tetrahydrodipicolinate (HTPA). This is 4-hydroxy-tetrahydrodipicolinate synthase from Shewanella frigidimarina (strain NCIMB 400).